Here is a 302-residue protein sequence, read N- to C-terminus: MSDSRRVPITFQGLIQTLNQYWAEQGCVLIQPLDLEVGAGTFHPATFLRALGPEPWNAAYVQPSRRPTDGRYGENPNRLQRYYQYQVAMKPNPDNIQDLYLGSLQALGIDPLVHDLRFVEDNWESPTLGAWGLGWEVWLNGMEVTQFTYFQQAGGLECKPVLGEITYGLERLCMYLQSCDNVYELVWTYGPDGAAVTYGDVYHQNEVEQSTYNFEHANVAELFHRFDACEAEARHLVEVGLPLPAYEQVTKASHAFNLLDARRAISVTERQRYILRVRALAQGVAQAYYAQREKLGFPGVKR.

The protein belongs to the class-II aminoacyl-tRNA synthetase family. Tetramer of two alpha and two beta subunits.

It is found in the cytoplasm. The enzyme catalyses tRNA(Gly) + glycine + ATP = glycyl-tRNA(Gly) + AMP + diphosphate. The sequence is that of Glycine--tRNA ligase alpha subunit from Xanthomonas axonopodis pv. citri (strain 306).